A 197-amino-acid polypeptide reads, in one-letter code: MAASQVDQKRALNKLKHDLEPFRTAIVGAYGVLTWEKQYYAGVVFGVISCLYLVLWYLDLSLITLLSLLGVISILLNYAFPMVSRLIFGGVNWDGDQEAKFEDVCGQVCAVKGSLVVWYEYLFNERKSTVFVIVMSLGLLAMAWIGAIINNLLLMYLATLLILMWPGLQNKDIFKAITQRASKIINEKIQCGKRKLQ.

Helical transmembrane passes span 43–63, 64–84, 129–149, and 150–170; these read VVFGVISCLYLVLWYLDLSLI, TLLSLLGVISILLNYAFPMVS, TVFVIVMSLGLLAMAWIGAII, and NNLLLMYLATLLILMWPGLQN.

The protein belongs to the ARL6ip family.

The protein localises to the membrane. The chain is ADP-ribosylation factor-like protein 6-interacting protein 1 from Drosophila melanogaster (Fruit fly).